Here is a 231-residue protein sequence, read N- to C-terminus: 5'-methylthioadenosine/S-adenosylhomocysteine nucleosidase (231 aa).

The Proton acceptor role is filled by Glu12. Substrate contacts are provided by residues Gly78, Val153, and 174-175 (ME). Asp198 (proton donor) is an active-site residue.

This sequence belongs to the PNP/UDP phosphorylase family. MtnN subfamily.

It carries out the reaction S-adenosyl-L-homocysteine + H2O = S-(5-deoxy-D-ribos-5-yl)-L-homocysteine + adenine. The enzyme catalyses S-methyl-5'-thioadenosine + H2O = 5-(methylsulfanyl)-D-ribose + adenine. The catalysed reaction is 5'-deoxyadenosine + H2O = 5-deoxy-D-ribose + adenine. It functions in the pathway amino-acid biosynthesis; L-methionine biosynthesis via salvage pathway; S-methyl-5-thio-alpha-D-ribose 1-phosphate from S-methyl-5'-thioadenosine (hydrolase route): step 1/2. In terms of biological role, catalyzes the irreversible cleavage of the glycosidic bond in both 5'-methylthioadenosine (MTA) and S-adenosylhomocysteine (SAH/AdoHcy) to adenine and the corresponding thioribose, 5'-methylthioribose and S-ribosylhomocysteine, respectively. Also cleaves 5'-deoxyadenosine, a toxic by-product of radical S-adenosylmethionine (SAM) enzymes, into 5-deoxyribose and adenine. This Vibrio cholerae serotype O1 (strain ATCC 39315 / El Tor Inaba N16961) protein is 5'-methylthioadenosine/S-adenosylhomocysteine nucleosidase.